A 178-amino-acid polypeptide reads, in one-letter code: Inorganic pyrophosphatase (178 aa).

Substrate contacts are provided by lysine 29, arginine 43, and tyrosine 55. Mg(2+) is bound by residues aspartate 65, aspartate 70, and aspartate 102. Tyrosine 141 contacts substrate.

It belongs to the PPase family. In terms of assembly, homohexamer. Mg(2+) is required as a cofactor.

It localises to the cytoplasm. It catalyses the reaction diphosphate + H2O = 2 phosphate + H(+). Its function is as follows. Catalyzes the hydrolysis of inorganic pyrophosphate (PPi) forming two phosphate ions. This Rickettsia typhi (strain ATCC VR-144 / Wilmington) protein is Inorganic pyrophosphatase.